Here is a 160-residue protein sequence, read N- to C-terminus: Large ribosomal subunit protein uL16 (160 aa).

Residues 138–148 (KNLEVSSQENT) are compositionally biased toward polar residues. Positions 138–160 (KNLEVSSQENTKNNKESQEEVKQ) are disordered. The segment covering 149–160 (KNNKESQEEVKQ) has biased composition (basic and acidic residues).

This sequence belongs to the universal ribosomal protein uL16 family. In terms of assembly, part of the 50S ribosomal subunit.

Binds 23S rRNA and is also seen to make contacts with the A and possibly P site tRNAs. The protein is Large ribosomal subunit protein uL16 of Prochlorococcus marinus (strain MIT 9312).